The sequence spans 81 residues: Sulfur carrier protein TusA (81 aa).

Catalysis depends on Cys-20, which acts as the Cysteine persulfide intermediate.

This sequence belongs to the sulfur carrier protein TusA family.

It localises to the cytoplasm. Sulfur carrier protein which probably makes part of a sulfur-relay system. The sequence is that of Sulfur carrier protein TusA from Colwellia psychrerythraea (strain 34H / ATCC BAA-681) (Vibrio psychroerythus).